A 337-amino-acid polypeptide reads, in one-letter code: Tetraacyldisaccharide 4'-kinase (337 aa).

Residue 52 to 59 coordinates ATP; the sequence is TLGGAGKT.

Belongs to the LpxK family.

It catalyses the reaction a lipid A disaccharide + ATP = a lipid IVA + ADP + H(+). It functions in the pathway glycolipid biosynthesis; lipid IV(A) biosynthesis; lipid IV(A) from (3R)-3-hydroxytetradecanoyl-[acyl-carrier-protein] and UDP-N-acetyl-alpha-D-glucosamine: step 6/6. Transfers the gamma-phosphate of ATP to the 4'-position of a tetraacyldisaccharide 1-phosphate intermediate (termed DS-1-P) to form tetraacyldisaccharide 1,4'-bis-phosphate (lipid IVA). The polypeptide is Tetraacyldisaccharide 4'-kinase (Methylobacterium nodulans (strain LMG 21967 / CNCM I-2342 / ORS 2060)).